We begin with the raw amino-acid sequence, 346 residues long: LRP2-binding protein (346 aa).

The stretch at 58–91 (AMAYFLRGQLYFEEGWYEEALAQFEEIQEKDHQA) is one TPR repeat. 6 Sel1-like repeats span residues 92 to 124 (IYQLGVMYYDGLGTVADAEKGVGYMKKILDSSC), 132 to 167 (FAAAYNLGRAYFEGKGVKRSDEEAERLWLYAADNGN), 172 to 205 (VKAQSILGLFYSMKEPKDLEKAFFWHSEACGNGN), 206 to 241 (LESQGALGLMYLYGQGIRQDTDAALHCLREAAERGN), 242 to 276 (VYAQGILVEYYYKMKFFTKCVSFSKRIADYDEVHD), and 296 to 331 (AMASFYYARCLQLGLGITKDEASAKHYYSKACRLNP).

Interacts with LRP2.

The protein localises to the cytoplasm. Its function is as follows. May act as an adapter that regulates LRP2 function. This Rattus norvegicus (Rat) protein is LRP2-binding protein (Lrp2bp).